We begin with the raw amino-acid sequence, 634 residues long: Chaperone protein HtpG (634 aa).

The tract at residues 1 to 342 (MSVETQKETL…SNDLSLNVSR (342 aa)) is a; substrate-binding. The segment at 343-559 (EILQKDPVID…EQDLGLQMRQ (217 aa)) is b. The tract at residues 560 to 634 (ILEASGQKVP…LNKLLVELSA (75 aa)) is c.

The protein belongs to the heat shock protein 90 family. In terms of assembly, homodimer.

The protein localises to the cytoplasm. In terms of biological role, molecular chaperone. Has ATPase activity. In Pseudomonas aeruginosa (strain ATCC 15692 / DSM 22644 / CIP 104116 / JCM 14847 / LMG 12228 / 1C / PRS 101 / PAO1), this protein is Chaperone protein HtpG.